The sequence spans 965 residues: Chondroitin synthase (965 aa).

The segment at 132–418 is galactosaminyltransferase; A1 domain; sequence FTWYKNRKKS…IVKEKVPYIY (287 aa). UDP-N-acetyl-alpha-D-galactosamine-binding positions include P158, R162, D189, Y218, R224, and 240–241; that span reads DC. D242 lines the Mn(2+) pocket. Residue 362–363 participates in UDP-N-acetyl-alpha-D-galactosamine binding; the sequence is ED. Mn(2+) is bound at residue H387. The interval 419–683 is glucuronosyltransferase; A2 domain; it reads RKLLPIEDSH…ESRKYIFNKT (265 aa). Residues Y442, D470, and 518 to 521 contribute to the UDP-alpha-D-glucuronate site; that span reads QLDS. Residue D522 participates in Mn(2+) binding. UDP-alpha-D-glucuronate is bound by residues H582 and 604 to 605; that span reads AV. H632 contributes to the Mn(2+) binding site.

Belongs to the glycosyltransferase 2 family. CS/HAS subfamily. Mn(2+) is required as a cofactor.

It is found in the cell membrane. It carries out the reaction 3-O-(beta-D-GlcA-(1-&gt;3)-beta-D-GalNAc-(1-&gt;4)-beta-D-GlcA-(1-&gt;3)-beta-D-Gal-(1-&gt;3)-beta-D-Gal-(1-&gt;4)-beta-D-Xyl)-L-seryl-[protein] + UDP-N-acetyl-alpha-D-galactosamine = 3-O-(beta-D-GalNAc-(1-&gt;4)-beta-D-GlcA-(1-&gt;3)-beta-D-GalNAc-(1-&gt;4)-beta-D-GlcA-(1-&gt;3)-beta-D-Gal-(1-&gt;3)-beta-D-Gal-(1-&gt;4)-beta-D-Xyl)-L-seryl-[protein] + UDP + H(+). It catalyses the reaction 3-O-{beta-D-GlcA-(1-&gt;3)-[beta-D-GalNAc-(1-&gt;4)-beta-D-GlcA-(1-&gt;3)](n)-beta-D-GalNAc-(1-&gt;4)-beta-D-GlcA-(1-&gt;3)-beta-D-Gal-(1-&gt;3)-beta-D-Gal-(1-&gt;4)-beta-D-Xyl}-L-seryl-[protein] + UDP-N-acetyl-alpha-D-galactosamine = 3-O-{[beta-D-GalNAc-(1-&gt;4)-beta-D-GlcA-(1-&gt;3)](n+1)-beta-D-GalNAc-(1-&gt;4)-beta-D-GlcA-(1-&gt;3)-beta-D-Gal-(1-&gt;3)-beta-D-Gal-(1-&gt;4)-beta-D-Xyl}-L-seryl-[protein] + UDP + H(+). The enzyme catalyses 3-O-(beta-D-GalNAc-(1-&gt;4)-beta-D-GlcA-(1-&gt;3)-beta-D-Gal-(1-&gt;3)-beta-D-Gal-(1-&gt;4)-beta-D-Xyl)-L-seryl-[protein] + UDP-alpha-D-glucuronate = 3-O-(beta-D-GlcA-(1-&gt;3)-beta-D-GalNAc-(1-&gt;4)-beta-D-GlcA-(1-&gt;3)-beta-D-Gal-(1-&gt;3)-beta-D-Gal-(1-&gt;4)-beta-D-Xyl)-L-seryl-[protein] + UDP + H(+). The catalysed reaction is 3-O-{[beta-D-GalNAc-(1-&gt;4)-beta-D-GlcA-(1-&gt;3)](n)-beta-D-GalNAc-(1-&gt;4)-beta-D-GlcA-(1-&gt;3)-beta-D-Gal-(1-&gt;3)-beta-D-Gal-(1-&gt;4)-beta-D-Xyl}-L-seryl-[protein] + UDP-alpha-D-glucuronate = 3-O-{beta-D-GlcA-(1-&gt;3)-[beta-D-GalNAc-(1-&gt;4)-beta-D-GlcA-(1-&gt;3)](n)-beta-D-GalNAc-(1-&gt;4)-beta-D-GlcA-(1-&gt;3)-beta-D-Gal-(1-&gt;3)-beta-D-Gal-(1-&gt;4)-beta-D-Xyl}-L-seryl-[protein] + UDP + H(+). Its function is as follows. Glycosyltransferase that catalyzes elongation of chondroitin, a polysaccharide composed of a repeating disaccharide of N-acetylgalactosamine (GalNAc) and glucuronic acid (GlcUA) units, by alternatively transferring the GlcUA and GalNAc moiety from UDP-GlcUA and UDP-GalNAc to the non-reducing ends of the chondroitin chain. Each chondroitin unit has the composition beta-(1-&gt;4)-GlcUA-beta-(1-&gt;3)-GalNAc. The sequence is that of Chondroitin synthase (fcbD) from Pasteurella multocida (strain Pm70).